Consider the following 171-residue polypeptide: Secretion monitor (171 aa).

The N-terminal stretch at 1–36 is a signal peptide; that stretch reads MIGILNRWRQFGRRYFWPHLLLGMVAASLGLPTSLN.

This sequence belongs to the SecM family.

It localises to the cytoplasm. The protein localises to the cytosol. The protein resides in the periplasm. Regulates secA expression by translational coupling of the secM secA operon. Translational pausing at a specific Pro residue 5 residues before the end of the protein may allow disruption of a mRNA repressor helix that normally suppresses secA translation initiation. The protein is Secretion monitor of Pectobacterium carotovorum subsp. carotovorum (strain PC1).